A 211-amino-acid chain; its full sequence is Ribosomal RNA small subunit methyltransferase G (211 aa).

Residues Gly-72, Phe-77, 125–126 (IE), and Arg-141 contribute to the S-adenosyl-L-methionine site.

Belongs to the methyltransferase superfamily. RNA methyltransferase RsmG family.

The protein resides in the cytoplasm. The catalysed reaction is guanosine(527) in 16S rRNA + S-adenosyl-L-methionine = N(7)-methylguanosine(527) in 16S rRNA + S-adenosyl-L-homocysteine. Its function is as follows. Specifically methylates the N7 position of guanine in position 527 of 16S rRNA. The protein is Ribosomal RNA small subunit methyltransferase G of Allorhizobium ampelinum (strain ATCC BAA-846 / DSM 112012 / S4) (Agrobacterium vitis (strain S4)).